A 761-amino-acid chain; its full sequence is Mitochondrial intermediate peptidase (761 aa).

A mitochondrion-targeting transit peptide spans 1 to 37; it reads MLIQKILLNKEISRLPRILSILNYTGLRWLSGSSGRN. Residue H547 participates in Zn(2+) binding. E548 is a catalytic residue. H551 and H554 together coordinate Zn(2+).

The protein belongs to the peptidase M3 family. Requires Zn(2+) as cofactor.

Its subcellular location is the mitochondrion matrix. The catalysed reaction is Release of an N-terminal octapeptide as second stage of processing of some proteins imported into the mitochondrion.. In terms of biological role, cleaves proteins, imported into the mitochondrion, to their mature size. While most mitochondrial precursor proteins are processed to the mature form in one step by mitochondrial processing peptidase (MPP), the sequential cleavage by MIP of an octapeptide after initial processing by MPP is a required step for a subgroup of nuclear-encoded precursor proteins destined for the matrix or the inner membrane. This chain is Mitochondrial intermediate peptidase (OCT1), found in Candida glabrata (strain ATCC 2001 / BCRC 20586 / JCM 3761 / NBRC 0622 / NRRL Y-65 / CBS 138) (Yeast).